The chain runs to 419 residues: KGSTKRANLDPLFEKYISDLKRYLDNLINEKGRLQQELRTLQDLVEDFKKKYEDEINKRTKAENDFVVLKKDVDAAYMIKTELEAKVDTLTSEINFFRTLFAAELSQVHDQVTDTSVVLTMDNNRDLNLDSIIKEVKCQYEQIAQRSKLEAEALYDQRYKQLQQTVEGHGDSIKNSKTEISDLNLKIQRLKAEIENVKKQIAFLNQSIAGAEERGNLALKDAERKLKDLEDAERKLKADMARQLKEYQELMSAKLALNLEISTYRYMLEGEEGRMSGQISNNVSISVISGGSSVYTALGGAAGGMGGGGGMGGGMGGGMGMGGGMGMGGGMGMGGGMGMGGGMGGGMGMGGGMGMGGGMGMGDGMGSGHGGGYGNEACFGGGMGYEGGSMHGGGSSYGHSGGKTSVAIASTTSTTKRSY.

The linker 1 stretch occupies residues 1–16 (KGSTKRANLDPLFEKY). An IF rod domain is found at 1 to 275 (KGSTKRANLD…YMLEGEEGRM (275 aa)). Positions 17-108 (ISDLKRYLDN…TLFAAELSQV (92 aa)) are coil 1B. Residues 109 to 132 (HDQVTDTSVVLTMDNNRDLNLDSI) form a linker 12 region. Residues 133-271 (IKEVKCQYEQ…STYRYMLEGE (139 aa)) form a coil 2 region. Residues 272 to 419 (EGRMSGQISN…STTSTTKRSY (148 aa)) are tail.

The protein belongs to the intermediate filament family. As to quaternary structure, heterotetramer of two type I and two type II keratins.

The chain is Keratin, type II cytoskeletal I from Xenopus laevis (African clawed frog).